The following is a 355-amino-acid chain: GPN-loop GTPase 1 (355 aa).

Residues 1-30 (MAEKAENLPSSSAEASEEPSPQTGPNVNQK) are disordered. The span at 9–21 (PSSSAEASEEPSP) shows a compositional bias: low complexity. 40-45 (GSGKTT) provides a ligand contact to GTP. The Gly-Pro-Asn (GPN)-loop; involved in dimer interface motif lies at 97–99 (GPN). 200–203 (NKAD) contributes to the GTP binding site. Residues 286-311 (EKVLAEKKLLDEEERKKRDEETLKGK) are a coiled coil.

The protein belongs to the GPN-loop GTPase family. In terms of assembly, heterodimer with GPN3. Binds to RNA polymerase II (RNAPII).

It is found in the cytoplasm. Its subcellular location is the nucleus. Functionally, small GTPase required for proper nuclear import of RNA polymerase II (RNAPII). May act at an RNAP assembly step prior to nuclear import. The protein is GPN-loop GTPase 1 of Caenorhabditis elegans.